Here is a 364-residue protein sequence, read N- to C-terminus: MPSPHSLQTLAKKILATQQISTDHYFILKYCGLWWHGAPIMLSTNEDNQLMIKSASFKEGLSLDLALMKVVQENNHDLIKLFTEWGADINSSFVTVNMECTRNLCRELGAKEALNERDILQIFYKTRDIKTSSHVILCHELLSNNPLFQNIERMRSIIYRSLEKLSINFILDDISFSEMLTRHWYGLAILYNLTEAIQYFYEKYKHFKNWRLICGLSFNNLSDLYEIYNLEKVDMNIDEMMYLACSIYDGNYSTIYYCFVLGADINQAMLTSVINHCIGNLFLCIDLGADAFEDSMELAKQKNDNIFISILSFKNYSPDSSLLSLKMTDPEKINALLDEEKYESKNMLMFDAHDEKTSTSPVRL.

This sequence belongs to the asfivirus MGF 360 family.

Functionally, plays a role in virus cell tropism, and may be required for efficient virus replication in macrophages. This African swine fever virus (isolate Tick/South Africa/Pretoriuskop Pr4/1996) (ASFV) protein is Protein MGF 360-18R.